Here is a 91-residue protein sequence, read N- to C-terminus: Large ribosomal subunit protein bL27 (91 aa).

Residues 1–10 (MAQKKGGGST) are compositionally biased toward gly residues. Residues 1 to 20 (MAQKKGGGSTRNGRDSQPKM) form a disordered region.

Belongs to the bacterial ribosomal protein bL27 family.

This chain is Large ribosomal subunit protein bL27, found in Verminephrobacter eiseniae (strain EF01-2).